We begin with the raw amino-acid sequence, 396 residues long: NADH-quinone oxidoreductase subunit D (396 aa).

The protein belongs to the complex I 49 kDa subunit family. NDH-1 is composed of 14 different subunits. Subunits NuoB, C, D, E, F, and G constitute the peripheral sector of the complex.

Its subcellular location is the cell inner membrane. The enzyme catalyses a quinone + NADH + 5 H(+)(in) = a quinol + NAD(+) + 4 H(+)(out). In terms of biological role, NDH-1 shuttles electrons from NADH, via FMN and iron-sulfur (Fe-S) centers, to quinones in the respiratory chain. The immediate electron acceptor for the enzyme in this species is believed to be ubiquinone. Couples the redox reaction to proton translocation (for every two electrons transferred, four hydrogen ions are translocated across the cytoplasmic membrane), and thus conserves the redox energy in a proton gradient. The polypeptide is NADH-quinone oxidoreductase subunit D (Bartonella henselae (strain ATCC 49882 / DSM 28221 / CCUG 30454 / Houston 1) (Rochalimaea henselae)).